Here is a 1366-residue protein sequence, read N- to C-terminus: DNA-directed RNA polymerase subunit beta' (1366 aa).

Residues 1-23 (MTSSKPKKSSRVRKTSKNSKKNN) show a composition bias toward basic residues. A disordered region spans residues 1-25 (MTSSKPKKSSRVRKTSKNSKKNNKI). Residues Cys-248, Cys-315, Cys-322, and Cys-325 each contribute to the Zn(2+) site. Residues 1290–1366 (DYTVDMPQSP…LQEEGLLSDE (77 aa)) are disordered. Residues 1295 to 1305 (MPQSPTVSSTA) are compositionally biased toward polar residues. Positions 1354 to 1366 (LEGLQEEGLLSDE) are enriched in low complexity.

It belongs to the RNA polymerase beta' chain family. RpoC2 subfamily. As to quaternary structure, in cyanobacteria the RNAP catalytic core is composed of 2 alpha, 1 beta, 1 beta', 1 gamma and 1 omega subunit. When a sigma factor is associated with the core the holoenzyme is formed, which can initiate transcription. Requires Zn(2+) as cofactor.

It carries out the reaction RNA(n) + a ribonucleoside 5'-triphosphate = RNA(n+1) + diphosphate. Functionally, DNA-dependent RNA polymerase catalyzes the transcription of DNA into RNA using the four ribonucleoside triphosphates as substrates. In Prochlorococcus marinus (strain MIT 9515), this protein is DNA-directed RNA polymerase subunit beta'.